A 392-amino-acid polypeptide reads, in one-letter code: Enoyl-[acyl-carrier-protein] reductase [NADH] (392 aa).

NAD(+) is bound by residues 48–53 (GCSTGY), 74–75 (FE), 111–112 (DA), and 139–140 (LA). Tyr225 contacts substrate. Catalysis depends on Tyr235, which acts as the Proton donor. NAD(+)-binding positions include Lys244 and 273–275 (LVT).

The protein belongs to the TER reductase family. As to quaternary structure, monomer.

The catalysed reaction is a 2,3-saturated acyl-[ACP] + NAD(+) = a (2E)-enoyl-[ACP] + NADH + H(+). The protein operates within lipid metabolism; fatty acid biosynthesis. In terms of biological role, involved in the final reduction of the elongation cycle of fatty acid synthesis (FAS II). Catalyzes the reduction of a carbon-carbon double bond in an enoyl moiety that is covalently linked to an acyl carrier protein (ACP). The protein is Enoyl-[acyl-carrier-protein] reductase [NADH] of Idiomarina loihiensis (strain ATCC BAA-735 / DSM 15497 / L2-TR).